The following is a 326-amino-acid chain: GTPase IMAP family member 5 (326 aa).

Residues 1 to 297 (MEDHGFEELS…MLCRVTSCLD (297 aa)) lie on the Cytoplasmic side of the membrane. The region spanning 42–245 (SGLLRILLVG…HSNDLFVYTQ (204 aa)) is the AIG1-type G domain. Residues 51-59 (GKSGCGKSA), Ser72, 169-171 (HKE), and Asn206 each bind GTP. Residues 298 to 318 (WHIAVSVLLIVLGLTLLITLI) traverse the membrane as a helical; Anchor for type IV membrane protein segment. The Lumenal portion of the chain corresponds to 319–326 (NMYIGRWK).

This sequence belongs to the TRAFAC class TrmE-Era-EngA-EngB-Septin-like GTPase superfamily. AIG1/Toc34/Toc159-like paraseptin GTPase family. IAN subfamily. Interacts with BAD, BAK1, BAX, BCL2, BCL2L1/Bcl-xL and BCL2L11/BimEL. The interaction with BAX is increased, when cells initiate apoptosis upon IL2 withdrawal. Forms a complex with BCL2L1 or MCL1 and HSPA8/HSC70; the interaction between HSPA8 and BCL2L1 or MCL1 is impaired in the absence of GIMAP5. May interact (via N-terminus) with microtubules. In terms of tissue distribution, primarily expressed in spleen, heart, lung and intestine and, at lower levels, in kidney, stomach and muscle. Expressed in thymus and lymph nodes (at protein level). In the spleen, expressed in periarteriolar lymphatic sheets. Isoform 2: Expressed at higher levels in T lymphocytes compared to isoform 1.

Its subcellular location is the lysosome membrane. The protein localises to the endosome. It is found in the multivesicular body membrane. The protein resides in the endosome membrane. Functionally, required for mitochondrial integrity and T-cell survival. May contribute to T-cell quiescence. In terms of biological role, plays a role in T lymphocyte development and the optimal generation of CD4/CD8 double-positive thymocytes. Inhibitor of GSK3A, possibly by sequestering GSK3A in cytoplasmic vesicles and impairing its translocation to the nucleus. Consequently, impairs GSK3A-dependent transcriptional program and regulation of the DNA damage response occurring during T cells proliferation. Required for the survival of peripheral T cells, natural killer (NK) and NK T-cell development and the maintenance of normal liver function. Promotes the survival of quiescent T-cells. May regulate Ca(2+) homeostasis by modulating lysosomal Ca(2+) stores, preventing its accumulation in the absence of T cell activation. May play a role in mitochondrial DNA segregation in hematopoietic tissues. Is a regulator of liver endothelial cell homeostasis. The sequence is that of GTPase IMAP family member 5 (Gimap5) from Rattus norvegicus (Rat).